Reading from the N-terminus, the 149-residue chain is Small ribosomal subunit protein uS13 (149 aa).

It belongs to the universal ribosomal protein uS13 family. In terms of assembly, part of the 30S ribosomal subunit. Forms a loose heterodimer with protein S19. Forms two bridges to the 50S subunit in the 70S ribosome.

Located at the top of the head of the 30S subunit, it contacts several helices of the 16S rRNA. In the 70S ribosome it contacts the 23S rRNA (bridge B1a) and protein L5 of the 50S subunit (bridge B1b), connecting the 2 subunits; these bridges are implicated in subunit movement. This is Small ribosomal subunit protein uS13 from Thermococcus kodakarensis (strain ATCC BAA-918 / JCM 12380 / KOD1) (Pyrococcus kodakaraensis (strain KOD1)).